A 425-amino-acid chain; its full sequence is Glutamate-1-semialdehyde 2,1-aminomutase (425 aa).

K265 is subject to N6-(pyridoxal phosphate)lysine.

This sequence belongs to the class-III pyridoxal-phosphate-dependent aminotransferase family. HemL subfamily. As to quaternary structure, homodimer. It depends on pyridoxal 5'-phosphate as a cofactor.

The protein resides in the cytoplasm. The enzyme catalyses (S)-4-amino-5-oxopentanoate = 5-aminolevulinate. Its pathway is porphyrin-containing compound metabolism; protoporphyrin-IX biosynthesis; 5-aminolevulinate from L-glutamyl-tRNA(Glu): step 2/2. The protein is Glutamate-1-semialdehyde 2,1-aminomutase of Clostridium perfringens (strain ATCC 13124 / DSM 756 / JCM 1290 / NCIMB 6125 / NCTC 8237 / Type A).